An 847-amino-acid polypeptide reads, in one-letter code: E4 SUMO-protein ligase PIAL1 (847 aa).

An interacting domain (IND), required for interaction with MOM1 and PIAL2 region spans residues 113-271 (VNSPVTLISQ…EVVGSNSDCD (159 aa)). An SP-RING-type zinc finger spans residues 268–349 (SDCDIIEGPS…LRKILEEVGR (82 aa)). Zn(2+) is bound by residues Cys299, His301, Cys322, and Cys325. 7 tandem repeats follow at residues 569–591 (QRPV…ENAD), 592–614 (QRWM…GNTN), 615–637 (QRPI…GNTD), 638–659 (HRST…GNAD), 660–682 (QRPM…GYAH), 683–705 (QRPM…GTPD), and 706–728 (QRPM…GTTD). Residues 569-728 (QRPVPSYIAH…LPVSYGGTTD (160 aa)) are 7 X 23 AA approximate tandem repeats.

This sequence belongs to the PIAL protein ligase family. Homodimer. Interacts with MOM1 and PIAL2 to form a high molecular mass complex which mediates transcriptional gene silencing at heterochromatin regions. As to expression, expressed in leaves, stems and flowers, and, at low levels, in siliques and old leaves.

It is found in the nucleus. The protein operates within protein modification; protein sumoylation. Together with MOM1 and PIAL2, regulates transcriptional gene silencing (TGS) independently of changes in DNA methylation. E4-type SUMO ligase that promotes SUMO chain formation in a SCE1-dependent manner and thus contributes to a pathway for proteolytic removal of sumoylation substrates. Involved in stress responses (e.g. osmotic, salt and abscisic acid ABA) and sulfur metabolism. The chain is E4 SUMO-protein ligase PIAL1 from Arabidopsis thaliana (Mouse-ear cress).